A 153-amino-acid polypeptide reads, in one-letter code: Large ribosomal subunit protein uL15 (153 aa).

The tract at residues 21 to 40 (RGIGSGKGKTGGRGIKGQKS) is disordered. The span at 23-35 (IGSGKGKTGGRGI) shows a compositional bias: gly residues.

Belongs to the universal ribosomal protein uL15 family. In terms of assembly, part of the 50S ribosomal subunit.

Functionally, binds to the 23S rRNA. The sequence is that of Large ribosomal subunit protein uL15 from Rickettsia canadensis (strain McKiel).